Consider the following 691-residue polypeptide: Elongation factor G (691 aa).

The tr-type G domain maps to 8-282 (ERVRNIGIAA…AVIDYLPAPV (275 aa)). Residues 17 to 24 (AHIDAGKT), 81 to 85 (DTPGH), and 135 to 138 (NKMD) each bind GTP.

Belongs to the TRAFAC class translation factor GTPase superfamily. Classic translation factor GTPase family. EF-G/EF-2 subfamily.

It is found in the cytoplasm. Catalyzes the GTP-dependent ribosomal translocation step during translation elongation. During this step, the ribosome changes from the pre-translocational (PRE) to the post-translocational (POST) state as the newly formed A-site-bound peptidyl-tRNA and P-site-bound deacylated tRNA move to the P and E sites, respectively. Catalyzes the coordinated movement of the two tRNA molecules, the mRNA and conformational changes in the ribosome. This is Elongation factor G from Synechococcus sp. (strain CC9605).